Consider the following 140-residue polypeptide: Small ribosomal subunit protein uS12m (140 aa).

Residues 1 to 30 constitute a mitochondrion transit peptide; the sequence is MNFLRQSFGITKQLASQAIQCSYETAVRGM.

This sequence belongs to the universal ribosomal protein uS12 family.

The protein localises to the mitochondrion. This chain is Small ribosomal subunit protein uS12m (tko), found in Drosophila melanogaster (Fruit fly).